The following is an 890-amino-acid chain: DNA mismatch repair protein MutS (890 aa).

646–653 (GPNMAGKS) is a binding site for ATP.

This sequence belongs to the DNA mismatch repair MutS family.

This protein is involved in the repair of mismatches in DNA. It is possible that it carries out the mismatch recognition step. This protein has a weak ATPase activity. This is DNA mismatch repair protein MutS from Hyphomonas neptunium (strain ATCC 15444).